Here is a 1248-residue protein sequence, read N- to C-terminus: ABC transporter B family member 7 (1248 aa).

A run of 6 helical transmembrane segments spans residues I32–M52, F82–V102, F158–V175, L179–M201, G261–Y281, and V299–A321. In terms of domain architecture, ABC transmembrane type-1 1 spans M35 to A322. The 237-residue stretch at I357–R593 folds into the ABC transporter 1 domain. G392–S399 contacts ATP. Residues N473 and N652 are each glycosylated (N-linked (GlcNAc...) asparagine). A helical transmembrane segment spans residues V682–L702. The region spanning L683–K970 is the ABC transmembrane type-1 2 domain. N-linked (GlcNAc...) asparagine glycosylation occurs at N720. A helical membrane pass occupies residues S722–L742. N-linked (GlcNAc...) asparagine glycosylation occurs at N779. 4 helical membrane-spanning segments follow: residues I813–L833, V834–A854, G914–I934, and A939–T959. In terms of domain architecture, ABC transporter 2 spans I1005–A1242. G1040–S1047 provides a ligand contact to ATP. N-linked (GlcNAc...) asparagine glycosylation is found at N1094, N1193, and N1244.

It belongs to the ABC transporter superfamily. ABCB family. Multidrug resistance exporter (TC 3.A.1.201) subfamily.

The protein localises to the membrane. This is ABC transporter B family member 7 (ABCB7) from Arabidopsis thaliana (Mouse-ear cress).